The following is a 536-amino-acid chain: Protein ST7 homolog (536 aa).

2 helical membrane passes run 3–23 (CSWTFLWLLWIALVAVLLFAL) and 49–69 (FYVALTGTSSLVSGIILIFEW). A coiled-coil region spans residues 191-218 (LAEEESETVSQAENLLRRALRAIESTLN). The helical transmembrane segment at 465-485 (TLMMLLQTFICLAICILAVLA) threads the bilayer.

The protein belongs to the ST7 family.

The protein localises to the membrane. This chain is Protein ST7 homolog, found in Caenorhabditis elegans.